The primary structure comprises 230 residues: Ribose-5-phosphate isomerase A (230 aa).

Substrate contacts are provided by residues 28–31 (TGST), 83–86 (DGAD), and 97–100 (KGLG). The Proton acceptor role is filled by glutamate 106. Lysine 124 serves as a coordination point for substrate.

Belongs to the ribose 5-phosphate isomerase family. In terms of assembly, homodimer.

The catalysed reaction is aldehydo-D-ribose 5-phosphate = D-ribulose 5-phosphate. It functions in the pathway carbohydrate degradation; pentose phosphate pathway; D-ribose 5-phosphate from D-ribulose 5-phosphate (non-oxidative stage): step 1/1. In terms of biological role, catalyzes the reversible conversion of ribose-5-phosphate to ribulose 5-phosphate. The chain is Ribose-5-phosphate isomerase A from Gloeobacter violaceus (strain ATCC 29082 / PCC 7421).